A 46-amino-acid chain; its full sequence is MARYRCCRSRSRCRRRRRRSYRRRRRCCRRRRRRVCCRRYVRCRRR.

This sequence belongs to the protamine P1 family. As to expression, testis.

It localises to the nucleus. The protein resides in the chromosome. Its function is as follows. Protamines substitute for histones in the chromatin of sperm during the haploid phase of spermatogenesis. They compact sperm DNA into a highly condensed, stable and inactive complex. This chain is Sperm protamine P1 (PRM1), found in Glauconycteris beatrix (Beatrix's bat).